Consider the following 581-residue polypeptide: AP2-like ethylene-responsive transcription factor AIL6 (581 aa).

2 disordered regions span residues 105-132 and 205-240; these read VRYSDNSQTDTQDSSLTQIYDPRHHHNQ and NNTNHRNDNDNHYRGNNNGERINNNNNNDNEKTDSE. 2 stretches are compositionally biased toward low complexity: residues 108–122 and 218–232; these read SDNSQTDTQDSSLTQ and RGNNNGERINNNNNN. DNA-binding regions (AP2/ERF) lie at residues 268–331 and 367–425; these read IYRG…TNFP and IYRG…TNFE.

The protein belongs to the AP2/ERF transcription factor family. AP2 subfamily. Expressed in roots, seedlings, hypocotyl, inflorescence, siliques, and pistils. Also detected at low levels in leaves.

It is found in the nucleus. In terms of biological role, probably acts as a transcriptional activator. Binds to the GCC-box pathogenesis-related promoter element. May be involved in the regulation of gene expression by stress factors and by components of stress signal transduction pathways. This Arabidopsis thaliana (Mouse-ear cress) protein is AP2-like ethylene-responsive transcription factor AIL6.